The sequence spans 167 residues: Small ribosomal subunit protein uS3m (167 aa).

Residues 1–35 (MVALYCGGGLRPLMLSWSRDLPCIWRALHTSAVCF) constitute a mitochondrion transit peptide.

Belongs to the universal ribosomal protein uS3 family. Component of the mitochondrial ribosome small subunit (28S) which comprises a 12S rRNA and about 30 distinct proteins.

The protein localises to the mitochondrion. In Bos taurus (Bovine), this protein is Small ribosomal subunit protein uS3m (MRPS24).